We begin with the raw amino-acid sequence, 280 residues long: Homeobox protein Hox-B1b (280 aa).

The segment at G46 to H65 is disordered. Positions T170–K175 match the Antp-type hexapeptide motif. A DNA-binding region (homeobox) is located at residues H195–E254. The segment at K249–P280 is disordered. Basic and acidic residues predominate over residues V261–P280.

It belongs to the Antp homeobox family. Labial subfamily.

The protein localises to the nucleus. Its function is as follows. Sequence-specific transcription factor which is part of a developmental regulatory system that provides cells with specific positional identities on the anterior-posterior axis. The sequence is that of Homeobox protein Hox-B1b (hoxb1b) from Takifugu rubripes (Japanese pufferfish).